Reading from the N-terminus, the 304-residue chain is ATP phosphoribosyltransferase (304 aa).

This sequence belongs to the ATP phosphoribosyltransferase family. Long subfamily. Mg(2+) serves as cofactor.

It localises to the cytoplasm. The catalysed reaction is 1-(5-phospho-beta-D-ribosyl)-ATP + diphosphate = 5-phospho-alpha-D-ribose 1-diphosphate + ATP. The protein operates within amino-acid biosynthesis; L-histidine biosynthesis; L-histidine from 5-phospho-alpha-D-ribose 1-diphosphate: step 1/9. With respect to regulation, feedback inhibited by histidine. Functionally, catalyzes the condensation of ATP and 5-phosphoribose 1-diphosphate to form N'-(5'-phosphoribosyl)-ATP (PR-ATP). Has a crucial role in the pathway because the rate of histidine biosynthesis seems to be controlled primarily by regulation of HisG enzymatic activity. The chain is ATP phosphoribosyltransferase from Xylella fastidiosa (strain 9a5c).